A 792-amino-acid polypeptide reads, in one-letter code: Ubiquitin carboxyl-terminal hydrolase 10 (792 aa).

The interval 2–27 (TTQESIKPLVDRILSNPLQFNAAMIS) is DHR2-binding module. 2 disordered regions span residues 64–87 (AESKQIKENNLIDRPNGKKTNTVP) and 103–320 (KDAA…SITP). Residues 107–129 (DATGAKKSAELSTELSTEPPSSS) are compositionally biased toward low complexity. An SIR4-binding module region spans residues 109–145 (TGAKKSAELSTELSTEPPSSSSEDDKVGKEEEEEGEI). Residues 144-171 (EIFHEARDYVEPRKASLKERDNADKGDG) show a composition bias toward basic and acidic residues. Residues 167–208 (DKGDGEDIGEDIGEDIGEDIGEDIGEDIGENLGSPLATIDDS) are UTP22-binding module. Over residues 172–195 (EDIGEDIGEDIGEDIGEDIGEDIG) the composition is skewed to acidic residues. The span at 211 to 220 (ENEKEKRKEL) shows a compositional bias: basic and acidic residues. The span at 226–241 (SDDEIEDDEDEDDMDY) shows a compositional bias: acidic residues. Polar residues predominate over residues 288–297 (VNNTKENGNR). The USP domain maps to 362–733 (RGLLNHGVTC…NAYYLLYTRL (372 aa)). Cys371 (nucleophile) is an active-site residue. Residues 526–563 (LDPNSDLSSDSINGTSATTSTTTSNAATKPSLSSSSSV) form a disordered region. The span at 530–539 (SDLSSDSING) shows a compositional bias: polar residues. Over residues 540 to 563 (TSATTSTTTSNAATKPSLSSSSSV) the composition is skewed to low complexity. The active-site Proton acceptor is His691. The span at 749-766 (TGNVTSKSKQEQAVNEPN) shows a compositional bias: polar residues. Residues 749–792 (TGNVTSKSKQEQAVNEPNNRPLKINSKKNNRKKWKKNKKRKFTK) are disordered. Residues 773–792 (NSKKNNRKKWKKNKKRKFTK) are compositionally biased toward basic residues.

This sequence belongs to the peptidase C19 family. In terms of assembly, interacts with SIR4. Interacts with the proliferating-cell nuclear antigen PCNA/POL30. Interacts with DHR2 and UTP22.

It localises to the nucleus. Its subcellular location is the chromosome. It is found in the telomere. The protein localises to the nucleolus. It catalyses the reaction Thiol-dependent hydrolysis of ester, thioester, amide, peptide and isopeptide bonds formed by the C-terminal Gly of ubiquitin (a 76-residue protein attached to proteins as an intracellular targeting signal).. Functionally, deubiquitinating enzyme involved in telomere and HM loci silencing, which is the repression of chromatin structure which leads to a stop in the transcription of nearby genes. Targets histone H2B for deubiquitination, thus helping to localize SIR2 to the telomere. At silent chromatin, including telomeres and the rDNA locus, not only maintains low H2B 'Lys-123' ubiquitination (H2BK123Ub), but also low H3 'Lys-4' and 'Lys-79' methylation (H3K4me and H3K79me, respectively). Controls the proliferating-cell nuclear antigen PCNA/POL30 deubiquitination which is crucial for keeping TLS polymerases in check as well as for down-regulating the error-free bypass. Deubiquitinates and stabilizes RPA190, the largest subunit of RNA polymerase I, to achieve optimal levels of ribosomes and cell growth. Also protects nutrient transporters such as GAP1 from ubiquitin-dependent endocytosis. The sequence is that of Ubiquitin carboxyl-terminal hydrolase 10 (UBP10) from Saccharomyces cerevisiae (strain ATCC 204508 / S288c) (Baker's yeast).